The chain runs to 60 residues: Large ribosomal subunit protein bL32 (60 aa).

Positions 1–23 are enriched in basic residues; sequence MAKHPVPKKKTSKARRDARRSHH. The tract at residues 1 to 30 is disordered; it reads MAKHPVPKKKTSKARRDARRSHHALTPPTL.

As to quaternary structure, part of the 50S ribosomal subunit.

Its function is as follows. Found on the solvent side of the large subunit. This Thermus thermophilus (strain ATCC 27634 / DSM 579 / HB8) protein is Large ribosomal subunit protein bL32 (rpmF).